We begin with the raw amino-acid sequence, 624 residues long: MKKNRFTYGLALGALGIVFGDIGTSPLYALKVTLSGIPINQFNILGVLSLIFWSLIIVVSFKYLMIIFRADNDGEGGILALLALMKHKSTKYQPVFYIVAIFGAGLLLGDGMLTPAISVVSAVEGLGTLSDKLYPYVLPIASLILVLLFSLQAKGTARIGYLFGPLILIWFITIAILGILQILEHPVVLKAINPYYAIAFLVDEGLRGYFLLGGIFLVVTGGEALFADIGHFGKNPIRFSWFFIALPCLLLNYFGQGANLIVRPEEISNPFFMIAPPWFYLPLIIIATVATVIASQAVISATFSLTKQAVLLGLCPKIPIVQTSMLHSGQIYVPQINFILFIGTMAFCLAFKTSDNLAHAYGIAVNLEMLLVDAMVAYAAVSIWRWSTFNVIFLFGLFLLIDLAFLGANTHKFITGGWVPIVLAFFIAFIMYSWRYGLEYLRDNFYMNKEDISKILKQLQYKSLNQLPGVSAIFITDVYDKSGGSFLHFLKLNRSVPENVLIVNYIVDNIPYVHYSQRYEIVCLDEKVCKLVIHYGFMETINIPRSLEKACNKNILPFKFNVDTATFMVEIPNIMASKEKRSLSFYWQEKLFAFLMRNYSANLNIEFYKLPYNRTIAIGTYCIL.

12 consecutive transmembrane segments (helical) span residues 10–30 (LALG…LYAL), 48–68 (LSLI…MIIF), 94–114 (PVFY…GMLT), 133–153 (LYPY…SLQA), 159–179 (IGYL…ILGI), 210–230 (FLLG…ADIG), 242–262 (FFIA…NLIV), 270–290 (PFFM…ATVA), 331–351 (IYVP…CLAF), 363–383 (IAVN…AVSI), 388–408 (TFNV…FLGA), and 413–433 (FITG…IMYS).

The protein belongs to the HAK/KUP transporter (TC 2.A.72) family.

It localises to the cell inner membrane. It catalyses the reaction K(+)(in) + H(+)(in) = K(+)(out) + H(+)(out). Transport of potassium into the cell. Likely operates as a K(+):H(+) symporter. The protein is Probable potassium transport system protein Kup 1 of Legionella pneumophila (strain Paris).